The following is a 336-amino-acid chain: Aspartate--ammonia ligase (336 aa).

The protein belongs to the class-II aminoacyl-tRNA synthetase family. AsnA subfamily.

It localises to the cytoplasm. It carries out the reaction L-aspartate + NH4(+) + ATP = L-asparagine + AMP + diphosphate + H(+). It participates in amino-acid biosynthesis; L-asparagine biosynthesis; L-asparagine from L-aspartate (ammonia route): step 1/1. The sequence is that of Aspartate--ammonia ligase from Clostridium perfringens (strain 13 / Type A).